Here is a 272-residue protein sequence, read N- to C-terminus: 3-methyl-2-oxobutanoate hydroxymethyltransferase (272 aa).

Residues Asp-52 and Asp-91 each coordinate Mg(2+). 3-methyl-2-oxobutanoate is bound by residues 52–53, Asp-91, and Lys-121; that span reads DS. Glu-123 serves as a coordination point for Mg(2+). Glu-190 serves as the catalytic Proton acceptor.

The protein belongs to the PanB family. Homodecamer; pentamer of dimers. Mg(2+) is required as a cofactor.

The protein resides in the cytoplasm. The catalysed reaction is 3-methyl-2-oxobutanoate + (6R)-5,10-methylene-5,6,7,8-tetrahydrofolate + H2O = 2-dehydropantoate + (6S)-5,6,7,8-tetrahydrofolate. Its pathway is cofactor biosynthesis; (R)-pantothenate biosynthesis; (R)-pantoate from 3-methyl-2-oxobutanoate: step 1/2. Functionally, catalyzes the reversible reaction in which hydroxymethyl group from 5,10-methylenetetrahydrofolate is transferred onto alpha-ketoisovalerate to form ketopantoate. In Flavobacterium johnsoniae (strain ATCC 17061 / DSM 2064 / JCM 8514 / BCRC 14874 / CCUG 350202 / NBRC 14942 / NCIMB 11054 / UW101) (Cytophaga johnsonae), this protein is 3-methyl-2-oxobutanoate hydroxymethyltransferase.